The following is a 234-amino-acid chain: VVGGDECNINEHRFLVAIFNSNGFVCSGTLINQEWVLTAAHCDSTDFQIKLGAHSKKVLNEDEQIRNPKEKFICPNKKNDEVLDKDIMLIKLDSRVSNSEHIAPLSLPSSPPSVGSVCHIMGWGSITPIEVTFPDVPHCAYINLLDDAACQPGYPEVLPEYRTLCAGILEGGKDTCNYDSGGPLICNGQFQGIVSYGAHPCGQSLKPGIYTKVFDYNDWIQSIIAGNTAATCPP.

Positions 1–225 constitute a Peptidase S1 domain; that stretch reads VVGGDECNIN…YNDWIQSIIA (225 aa). 6 disulfides stabilise this stretch: Cys7–Cys139, Cys26–Cys42, Cys74–Cys232, Cys118–Cys186, Cys150–Cys165, and Cys176–Cys201. Residues His41 and Asp86 each act as charge relay system in the active site. Ser180 serves as the catalytic Charge relay system.

As to quaternary structure, monomer. Not glycosylated. In terms of tissue distribution, expressed by the venom gland.

The protein localises to the secreted. With respect to regulation, strongly inhibited by diisopropylfluorophosphate (DFP) and to a lesser extent by PMSF, benzamidine and 4,6-diamidino-2-phenylindole. Low inhibition by hirudin. Its function is as follows. Thrombin-like snake venom serine protease that cleaves beta chain of fibrinogen (FGB), releasing fibrinopeptide B. Has a coagulant activity activating blood coagulation factors V (F5) and XIII (F13A1). This chain is Thrombin-like enzyme contortrixobin, found in Agkistrodon contortrix contortrix (Southern copperhead).